The primary structure comprises 406 residues: 4-hydroxy-3-methylbut-2-en-1-yl diphosphate synthase (ferredoxin) (406 aa).

[4Fe-4S] cluster-binding residues include Cys-314, Cys-317, Cys-348, and Glu-355.

This sequence belongs to the IspG family. [4Fe-4S] cluster serves as cofactor.

The catalysed reaction is (2E)-4-hydroxy-3-methylbut-2-enyl diphosphate + 2 oxidized [2Fe-2S]-[ferredoxin] + H2O = 2-C-methyl-D-erythritol 2,4-cyclic diphosphate + 2 reduced [2Fe-2S]-[ferredoxin] + H(+). It participates in isoprenoid biosynthesis; isopentenyl diphosphate biosynthesis via DXP pathway; isopentenyl diphosphate from 1-deoxy-D-xylulose 5-phosphate: step 5/6. Its function is as follows. Converts 2C-methyl-D-erythritol 2,4-cyclodiphosphate (ME-2,4cPP) into 1-hydroxy-2-methyl-2-(E)-butenyl 4-diphosphate. The protein is 4-hydroxy-3-methylbut-2-en-1-yl diphosphate synthase (ferredoxin) of Prochlorococcus marinus (strain MIT 9313).